The sequence spans 446 residues: Tubulin beta-4 chain (446 aa).

GTP-binding residues include glutamine 11, glutamate 69, serine 138, glycine 142, threonine 143, glycine 144, asparagine 204, and asparagine 226. Glutamate 69 contributes to the Mg(2+) binding site. The span at 417–426 (DLVSEYQQYQ) shows a compositional bias: polar residues. Positions 417–446 (DLVSEYQQYQDATADEEGDYEDEDEALHDE) are disordered. Over residues 429-446 (TADEEGDYEDEDEALHDE) the composition is skewed to acidic residues.

Belongs to the tubulin family. As to quaternary structure, dimer of alpha and beta chains. A typical microtubule is a hollow water-filled tube with an outer diameter of 25 nm and an inner diameter of 15 nM. Alpha-beta heterodimers associate head-to-tail to form protofilaments running lengthwise along the microtubule wall with the beta-tubulin subunit facing the microtubule plus end conferring a structural polarity. Microtubules usually have 13 protofilaments but different protofilament numbers can be found in some organisms and specialized cells. Requires Mg(2+) as cofactor.

It localises to the cytoplasm. It is found in the cytoskeleton. Its function is as follows. Tubulin is the major constituent of microtubules, a cylinder consisting of laterally associated linear protofilaments composed of alpha- and beta-tubulin heterodimers. Microtubules grow by the addition of GTP-tubulin dimers to the microtubule end, where a stabilizing cap forms. Below the cap, tubulin dimers are in GDP-bound state, owing to GTPase activity of alpha-tubulin. This chain is Tubulin beta-4 chain (TUBB4), found in Eleusine indica (Goosegrass).